Here is a 212-residue protein sequence, read N- to C-terminus: Thymidylate kinase (212 aa).

Position 11 to 18 (11 to 18) interacts with ATP; it reads GLEGAGKT.

Belongs to the thymidylate kinase family.

It carries out the reaction dTMP + ATP = dTDP + ADP. Phosphorylation of dTMP to form dTDP in both de novo and salvage pathways of dTTP synthesis. The sequence is that of Thymidylate kinase (tmk) from Buchnera aphidicola subsp. Acyrthosiphon pisum (strain APS) (Acyrthosiphon pisum symbiotic bacterium).